Consider the following 466-residue polypeptide: 3-isopropylmalate dehydratase large subunit (466 aa).

Residues cysteine 347, cysteine 407, and cysteine 410 each coordinate [4Fe-4S] cluster.

The protein belongs to the aconitase/IPM isomerase family. LeuC type 1 subfamily. Heterodimer of LeuC and LeuD. It depends on [4Fe-4S] cluster as a cofactor.

The enzyme catalyses (2R,3S)-3-isopropylmalate = (2S)-2-isopropylmalate. It functions in the pathway amino-acid biosynthesis; L-leucine biosynthesis; L-leucine from 3-methyl-2-oxobutanoate: step 2/4. Its function is as follows. Catalyzes the isomerization between 2-isopropylmalate and 3-isopropylmalate, via the formation of 2-isopropylmaleate. This chain is 3-isopropylmalate dehydratase large subunit, found in Shigella flexneri.